A 439-amino-acid chain; its full sequence is Glutamate--tRNA ligase 2 (439 aa).

Positions 6–16 (PSPTGDMHIGN) match the 'HIGH' region motif. A 'KMSKS' region motif is present at residues 232–236 (KMSKR). Lys-235 serves as a coordination point for ATP.

This sequence belongs to the class-I aminoacyl-tRNA synthetase family. Glutamate--tRNA ligase type 1 subfamily. As to quaternary structure, monomer.

The protein localises to the cytoplasm. The catalysed reaction is tRNA(Glu) + L-glutamate + ATP = L-glutamyl-tRNA(Glu) + AMP + diphosphate. Catalyzes the attachment of glutamate to tRNA(Glu) in a two-step reaction: glutamate is first activated by ATP to form Glu-AMP and then transferred to the acceptor end of tRNA(Glu). This Helicobacter pylori (strain Shi470) protein is Glutamate--tRNA ligase 2.